The chain runs to 350 residues: Probable peptidyl-alpha-hydroxyglycine alpha-amidating lyase pgal-1 (350 aa).

The N-terminal stretch at 1-19 is a signal peptide; that stretch reads MRASTACLVALLAPFYISA. The NHL 1 repeat unit spans residues 46–90; the sequence is DRELIGLFNPSKEIGQVSGLAVNKNGHIVAFHRSGRVWDEKSFND. An N-linked (GlcNAc...) asparagine glycan is attached at Asn103. NHL repeat units lie at residues 113–154, 162–206, and 212–256; these read KKVI…IDAK, LGEK…FDAK, and QINA…FSAG. 2 cysteine pairs are disulfide-bonded: Cys176/Cys196 and Cys241/Cys252.

The protein belongs to the peptidyl-alpha-hydroxyglycine alpha-amidating lyase family. Zn(2+) is required as a cofactor.

The protein resides in the secreted. It carries out the reaction a [peptide]-C-terminal (2S)-2-hydroxyglycine = a [peptide]-C-terminal amide + glyoxylate. Functionally, probable lyase that catalyzes an essential reaction in C-terminal alpha-amidation of peptides. Mediates the dismutation of the unstable peptidyl(2-hydroxyglycine) intermediate to glyoxylate and the corresponding desglycine peptide amide. C-terminal amidation of peptides such as neuropeptides is essential for full biological activity. This is Probable peptidyl-alpha-hydroxyglycine alpha-amidating lyase pgal-1 from Caenorhabditis elegans.